Reading from the N-terminus, the 559-residue chain is Dihydroxy-acid dehydratase (559 aa).

Cys52 contributes to the [2Fe-2S] cluster binding site. A Mg(2+)-binding site is contributed by Asp84. Cys125 is a binding site for [2Fe-2S] cluster. Mg(2+) is bound by residues Asp126 and Lys127. Lys127 bears the N6-carboxylysine mark. Cys197 is a binding site for [2Fe-2S] cluster. Glu447 is a binding site for Mg(2+). The Proton acceptor role is filled by Ser473.

It belongs to the IlvD/Edd family. In terms of assembly, homodimer. [2Fe-2S] cluster is required as a cofactor. Mg(2+) serves as cofactor.

It carries out the reaction (2R)-2,3-dihydroxy-3-methylbutanoate = 3-methyl-2-oxobutanoate + H2O. It catalyses the reaction (2R,3R)-2,3-dihydroxy-3-methylpentanoate = (S)-3-methyl-2-oxopentanoate + H2O. It functions in the pathway amino-acid biosynthesis; L-isoleucine biosynthesis; L-isoleucine from 2-oxobutanoate: step 3/4. It participates in amino-acid biosynthesis; L-valine biosynthesis; L-valine from pyruvate: step 3/4. Its function is as follows. Functions in the biosynthesis of branched-chain amino acids. Catalyzes the dehydration of (2R,3R)-2,3-dihydroxy-3-methylpentanoate (2,3-dihydroxy-3-methylvalerate) into 2-oxo-3-methylpentanoate (2-oxo-3-methylvalerate) and of (2R)-2,3-dihydroxy-3-methylbutanoate (2,3-dihydroxyisovalerate) into 2-oxo-3-methylbutanoate (2-oxoisovalerate), the penultimate precursor to L-isoleucine and L-valine, respectively. The sequence is that of Dihydroxy-acid dehydratase from Roseiflexus sp. (strain RS-1).